A 345-amino-acid polypeptide reads, in one-letter code: Tubulin-specific chaperone C (345 aa).

Residue M1 is modified to N-acetylmethionine. Residues 1 to 56 are disordered; the sequence is METGGLSAAALANGDLGSQRERTLVPERLQKREHERQLEVERRKQKRQDQEVEEEK. Positions 18–50 are enriched in basic and acidic residues; the sequence is SQRERTLVPERLQKREHERQLEVERRKQKRQDQ. Phosphoserine is present on residues S80 and S167. Residues 139 to 170 are disordered; sequence FKTRKKDAASATQVASAPDAPAAEGSLTSPPP. Residues 170-322 form the C-CAP/cofactor C-like domain; sequence PLKEEGDFDS…NWNDVDDFNW (153 aa).

Belongs to the TBCC family. Supercomplex made of cofactors A to E. Cofactors A and D function by capturing and stabilizing tubulin in a quasi-native conformation. Cofactor E binds to the cofactor D-tubulin complex; interaction with cofactor C then causes the release of tubulin polypeptides that are committed to the native state.

It is found in the cytoplasm. Functionally, tubulin-folding protein; involved in the final step of the tubulin folding pathway. In Bos taurus (Bovine), this protein is Tubulin-specific chaperone C (TBCC).